The chain runs to 411 residues: Multidrug resistance protein MdtA (411 aa).

A signal peptide spans 1–19; that stretch reads MNAKRIRGLLILAAVIAIA. The segment covering 31 to 49 has biased composition (polar residues); that stretch reads PAAPGTSEQHAARTSHSEN. The disordered stretch occupies residues 31–58; sequence PAAPGTSEQHAARTSHSENSGSGGGRRA.

Belongs to the membrane fusion protein (MFP) (TC 8.A.1) family. In terms of assembly, part of a tripartite efflux system composed of MdtA, MdtB and MdtC.

The protein localises to the cell inner membrane. The sequence is that of Multidrug resistance protein MdtA from Pectobacterium atrosepticum (strain SCRI 1043 / ATCC BAA-672) (Erwinia carotovora subsp. atroseptica).